The following is a 165-amino-acid chain: Serine/threonine-protein phosphatase 2A 56 kDa regulatory subunit epsilon isoform (165 aa).

Residues 1–41 form a disordered region; the sequence is MSSAPTTPPSVDKVDGFSRKSVRKARQKRSQSSSQFRSQGK. An N-acetylserine modification is found at S2. A Phosphothreonine modification is found at T7. The segment covering 20–29 has biased composition (basic residues); the sequence is KSVRKARQKR. Phosphoserine occurs at positions 30, 32, and 34. Low complexity predominate over residues 30-41; it reads SQSSSQFRSQGK.

It belongs to the phosphatase 2A regulatory subunit B56 family. In terms of assembly, PP2A consists of a common heterodimeric core enzyme, composed of a 36 kDa catalytic subunit (subunit C) and a 65 kDa constant regulatory subunit (PR65 or subunit A), that associates with a variety of regulatory subunits. Proteins that associate with the core dimer include three families of regulatory subunits B (the R2/B/PR55/B55, R3/B''/PR72/PR130/PR59 and R5/B'/B56 families), the 48 kDa variable regulatory subunit, viral proteins, and cell signaling molecules. Interacts with SGO1. Found in a complex with at least ARL2, PPP2CB; PPP2R1A, PPP2R2A, PPP2R5E and TBCD. In terms of tissue distribution, highly expressed in testis, lung and brain.

It is found in the cytoplasm. Its function is as follows. The B regulatory subunit might modulate substrate selectivity and catalytic activity, and might also direct the localization of the catalytic enzyme to a particular subcellular compartment. This is Serine/threonine-protein phosphatase 2A 56 kDa regulatory subunit epsilon isoform (PPP2R5E) from Oryctolagus cuniculus (Rabbit).